We begin with the raw amino-acid sequence, 548 residues long: Cilia- and flagella-associated protein 97 (548 aa).

2 positions are modified to phosphoserine: Ser8 and Ser19. 3 disordered regions span residues 85-297 (NYLT…RQEN), 407-431 (LSRQ…PPKL), and 497-548 (YSPL…LRSH). Basic and acidic residues predominate over residues 91–107 (GNERKPKFPSKEQHVEN). The span at 112 to 121 (TRSPSLLTSS) shows a compositional bias: low complexity. Residues 152 to 161 (DYYTDGEESS) show a composition bias toward acidic residues. Thr155 is subject to Phosphothreonine. Phosphoserine occurs at positions 160 and 161. A compositionally biased stretch (low complexity) spans 191–209 (KASSSSLSSSSSRSSSDCS). Residues 214-237 (DMQNKPDSGSSGKRVSSVTPSSPK) show a composition bias toward polar residues. Ser235 carries the phosphoserine modification. Residues 238 to 248 (QKCKSGRKSSA) are compositionally biased toward basic residues. The residue at position 259 (Ser259) is a Phosphoserine. Residues 264-289 (TDVTPASTPDSSPAQPFELSQSQNQK) show a composition bias toward polar residues. Residues 383–460 (RKNYSFTREE…ALLKRLEAVK (78 aa)) are a coiled coil. Composition is skewed to polar residues over residues 504 to 514 (SRTSSATSGLS) and 537 to 548 (IQCSNSKVLRSH).

It belongs to the CFAP97 family.

The chain is Cilia- and flagella-associated protein 97 from Rattus norvegicus (Rat).